A 61-amino-acid chain; its full sequence is Large ribosomal subunit protein bL28 (61 aa).

Positions 1–24 are disordered; it reads MAKDYVTGKKTTFGNKRSHSLNPT. Residues 9–23 are compositionally biased toward polar residues; the sequence is KKTTFGNKRSHSLNP.

It belongs to the bacterial ribosomal protein bL28 family.

This chain is Large ribosomal subunit protein bL28, found in Lactobacillus acidophilus (strain ATCC 700396 / NCK56 / N2 / NCFM).